Reading from the N-terminus, the 990-residue chain is Bacteriophage adsorption protein A (990 aa).

The signal sequence occupies residues 1–27; the sequence is MKENNLNRVIGWSGLLLTSLLSTSALA. TPR repeat units follow at residues 81-114, 612-645, and 646-679; these read IPLTLYLAEAYRHFGHDDRARLLLEDQLKRHPGD, ANAYVARATIYRQRHNVPAAVSDLRAALELEPNN, and SNTQAALGYALWDSGDIAQSREMLEPAHKGLPDD.

In terms of assembly, (Microbial infection) Interacts with N4 phage non-contractile sheath protein; this interaction is essential for viral adsorption to the host.

The protein localises to the cell outer membrane. In terms of biological role, (Microbial infection) Allows N4 phage attachment by binding to the viral non-contractile sheath protein. The protein is Bacteriophage adsorption protein A (nfrA) of Escherichia coli (strain K12).